The following is a 277-amino-acid chain: MLLNILDIQAKKGLEKIACLTAYTFPMARILDEHCDLILVGDSVGQTVYGMESTLSVTLDMMIAHGKAVVKARSKALVVVDMPFASYYTPELAYKNASRILSETGCDAVKLEGGVCVAEEIAFLVARGIPVMGHVGLMPQHFNQLGGYKCQGKTDSSRQHIKEDAKAVCEAGAFCVVLECISPSLAAELTQELPVPTIGIGASNACDGQILVVDDMLGQSSRYPKFVKRFADLEHTIKDAVVGYVRAVKCSEFPGDEHCYSDGPHLRVFRAHPHHAQ.

Residues D42 and D81 each contribute to the Mg(2+) site. Residues 42–43 (DS), D81, and K110 contribute to the 3-methyl-2-oxobutanoate site. E112 is a binding site for Mg(2+). E179 (proton acceptor) is an active-site residue.

Belongs to the PanB family. Homodecamer; pentamer of dimers. Mg(2+) serves as cofactor.

The protein localises to the cytoplasm. The catalysed reaction is 3-methyl-2-oxobutanoate + (6R)-5,10-methylene-5,6,7,8-tetrahydrofolate + H2O = 2-dehydropantoate + (6S)-5,6,7,8-tetrahydrofolate. It functions in the pathway cofactor biosynthesis; (R)-pantothenate biosynthesis; (R)-pantoate from 3-methyl-2-oxobutanoate: step 1/2. Its function is as follows. Catalyzes the reversible reaction in which hydroxymethyl group from 5,10-methylenetetrahydrofolate is transferred onto alpha-ketoisovalerate to form ketopantoate. The sequence is that of 3-methyl-2-oxobutanoate hydroxymethyltransferase from Anaplasma marginale (strain St. Maries).